A 233-amino-acid polypeptide reads, in one-letter code: Orotidine 5'-phosphate decarboxylase (233 aa).

Substrate is bound by residues Asp-13, Lys-35, 62-71 (DLKFHDIPNT), Thr-122, Arg-182, Gln-191, Gly-211, and Arg-212. Lys-64 acts as the Proton donor in catalysis.

This sequence belongs to the OMP decarboxylase family. Type 1 subfamily. As to quaternary structure, homodimer.

The catalysed reaction is orotidine 5'-phosphate + H(+) = UMP + CO2. It functions in the pathway pyrimidine metabolism; UMP biosynthesis via de novo pathway; UMP from orotate: step 2/2. Its function is as follows. Catalyzes the decarboxylation of orotidine 5'-monophosphate (OMP) to uridine 5'-monophosphate (UMP). The polypeptide is Orotidine 5'-phosphate decarboxylase (Pseudomonas putida (strain GB-1)).